The primary structure comprises 123 residues: Small ribosomal subunit protein uS12cz/uS12cy (123 aa).

It belongs to the universal ribosomal protein uS12 family. As to quaternary structure, part of the 30S ribosomal subunit.

The protein resides in the plastid. Its subcellular location is the chloroplast. Functionally, with S4 and S5 plays an important role in translational accuracy. Located at the interface of the 30S and 50S subunits. The protein is Small ribosomal subunit protein uS12cz/uS12cy (rps12-A) of Arabis hirsuta (Hairy rock-cress).